A 483-amino-acid chain; its full sequence is Keratin, type II cytoskeletal 8 (483 aa).

Over residues 1–25 (MSVRVTQKSYKMSTSGPRAFSSRSF) the composition is skewed to polar residues. Residues 1-43 (MSVRVTQKSYKMSTSGPRAFSSRSFTSGPGARISSSSFSRVGS) are disordered. Positions 1–90 (MSVRVTQKSY…DPNIQAVRTQ (90 aa)) are head. Ser-9 bears the Phosphoserine; by PKC/PRKCE mark. Lys-11 participates in a covalent cross-link: Glycyl lysine isopeptide (Lys-Gly) (interchain with G-Cter in SUMO2). Ser-13, Ser-15, Ser-21, and Ser-22 each carry phosphoserine. Residue Arg-23 is modified to Omega-N-methylarginine. Ser-24 is subject to Phosphoserine; by PKC/PRKCE. Position 24 is a phosphoserine (Ser-24). The residue at position 26 (Thr-26) is a Phosphothreonine. The span at 26-43 (TSGPGARISSSSFSRVGS) shows a compositional bias: low complexity. Residue Ser-27 is modified to Phosphoserine. Position 32 is an omega-N-methylarginine (Arg-32). Phosphoserine occurs at positions 34, 37, and 39. Arg-40 is subject to Omega-N-methylarginine. Residues Ser-43, Ser-44, and Ser-47 each carry the phosphoserine modification. Arg-49 carries the post-translational modification Asymmetric dimethylarginine; alternate. Position 49 is an omega-N-methylarginine; alternate (Arg-49). Phosphoserine is present on Ser-51. A coil 1A region spans residues 91–126 (EKEQIKTLNNKFASFIDKVRFLEQQNKMLETKWSLL). Residues 91–402 (EKEQIKTLNN…KLLEGEESRL (312 aa)) form the IF rod domain. Residue Lys-101 is modified to N6-malonyllysine. Residues Lys-122 and Lys-130 each participate in a glycyl lysine isopeptide (Lys-Gly) (interchain with G-Cter in SUMO2) cross-link. Positions 127–143 (QQQKTSRSNMDNMFESY) are linker 1. Residues 144–235 (INNLRRQLEA…QIHEEEIREL (92 aa)) form a coil 1B region. Lys-197 is covalently cross-linked (Glycyl lysine isopeptide (Lys-Gly) (interchain with G-Cter in SUMO1); alternate). Lys-197 participates in a covalent cross-link: Glycyl lysine isopeptide (Lys-Gly) (interchain with G-Cter in SUMO2); alternate. Lys-207 is modified (N6-acetyllysine). Residues 236–259 (QSQISDTSVVLSMDNSRSLDMDSI) form a linker 12 region. A phosphoserine mark is found at Ser-253, Ser-258, and Ser-274. A coil 2 region spans residues 260 to 398 (IAEVRAQYEE…ATYRKLLEGE (139 aa)). Residues 261-382 (AEVRAQYEEI…EYQELMNVKL (122 aa)) are necessary for interaction with PNN. Residue Lys-285 forms a Glycyl lysine isopeptide (Lys-Gly) (interchain with G-Cter in SUMO2) linkage. Lys-295 is covalently cross-linked (Glycyl lysine isopeptide (Lys-Gly) (interchain with G-Cter in SUMO2); alternate). Lys-295 carries the post-translational modification N6-acetyllysine; alternate. Lys-304 participates in a covalent cross-link: Glycyl lysine isopeptide (Lys-Gly) (interchain with G-Cter in SUMO2). A Glycyl lysine isopeptide (Lys-Gly) (interchain with G-Cter in SUMO2); alternate cross-link involves residue Lys-325. Lys-325 is modified (N6-acetyllysine; alternate). Lys-393 participates in a covalent cross-link: Glycyl lysine isopeptide (Lys-Gly) (interchain with G-Cter in SUMO2). The segment at 399–483 (ESRLESGMQN…VSESSDIMSK (85 aa)) is tail. 7 positions are modified to phosphoserine: Ser-400, Ser-404, Ser-410, Ser-417, Ser-424, Ser-426, and Ser-432. Residue Lys-472 forms a Glycyl lysine isopeptide (Lys-Gly) (interchain with G-Cter in SUMO1); alternate linkage. Lys-472 is covalently cross-linked (Glycyl lysine isopeptide (Lys-Gly) (interchain with G-Cter in SUMO2); alternate). Phosphoserine is present on residues Ser-475, Ser-477, Ser-478, and Ser-482.

Belongs to the intermediate filament family. As to quaternary structure, heterotetramer of two type I and two type II keratins. Forms a heterodimer with KRT18. Associates with KRT20. Interacts with PNN. When associated with KRT19, interacts with DMD. Interacts with TCHP. Interacts with APEX1. Interacts with GPER1. Interacts with EPPK1. Interacts with PKP1 and PKP2. In terms of processing, O-glycosylated. O-GlcNAcylation at multiple sites increases solubility, and decreases stability by inducing proteasomal degradation. O-glycosylated (O-GlcNAcylated), in a cell cycle-dependent manner. Expressed in cardiac and striated muscle. Expressed at Z-lines within the muscle fibers and at Z-line and M-line domains at costameres at the sarcolemmal membrane (at protein level). Observed in coagulating gland, bladder, salivary gland, kidney, spleen, thymus, lung and heart. Also observed in ventral prostate, seminal vesicle and liver where expression increases following castration.

Its subcellular location is the cytoplasm. The protein localises to the nucleus. It is found in the nucleoplasm. It localises to the nucleus matrix. Together with KRT19, helps to link the contractile apparatus to dystrophin at the costameres of striated muscle. This is Keratin, type II cytoskeletal 8 (Krt8) from Rattus norvegicus (Rat).